The chain runs to 202 residues: Small ribosomal subunit protein uS4c (202 aa).

Residues 90–159 enclose the S4 RNA-binding domain; that stretch reads MRLDNIIFRL…TKNYEFSQTY (70 aa).

It belongs to the universal ribosomal protein uS4 family. As to quaternary structure, part of the 30S ribosomal subunit. Contacts protein S5. The interaction surface between S4 and S5 is involved in control of translational fidelity.

It localises to the plastid. Its subcellular location is the chloroplast. In terms of biological role, one of the primary rRNA binding proteins, it binds directly to 16S rRNA where it nucleates assembly of the body of the 30S subunit. Functionally, with S5 and S12 plays an important role in translational accuracy. This Huperzia lucidula (Shining clubmoss) protein is Small ribosomal subunit protein uS4c (rps4).